We begin with the raw amino-acid sequence, 72 residues long: Brevinin-2SN4 (72 aa).

Residues 1-22 (MFTMKKPMLLLFFLGMISMSLC) form the signal peptide. Positions 23–40 (QDERGADEDDGGEMTEEE) are cleaved as a propeptide — removed in mature form. A disulfide bond links Cys66 and Cys72.

Belongs to the frog skin active peptide (FSAP) family. Brevinin subfamily. Expressed by the skin glands.

Its subcellular location is the secreted. Functionally, antimicrobial peptide. Active against a variety of Gram-negative and Gram-positive bacterial strains. Not active against fungi. Shows very weak hemolytic activity against human erythrocytes. This Sylvirana spinulosa (Fine-spined frog) protein is Brevinin-2SN4.